A 613-amino-acid chain; its full sequence is Tetratricopeptide repeat protein 39A (613 aa).

3 TPR repeats span residues 315 to 348 (AIFLFFAGRIEVIKGNIDAAIRRFEECCEAQQHW), 505 to 538 (CLVKLLKGLCLKYLGRVQEAEENFRSISANEKKI), and 546 to 579 (PNALLELALLLMEQDRNEEAIKLLESAKQNYKNY).

The protein belongs to the TTC39 family.

This is Tetratricopeptide repeat protein 39A (TTC39A) from Homo sapiens (Human).